The following is a 91-amino-acid chain: Putative regulatory protein Tlet_1629 (91 aa).

It belongs to the RemA family.

This is Putative regulatory protein Tlet_1629 from Pseudothermotoga lettingae (strain ATCC BAA-301 / DSM 14385 / NBRC 107922 / TMO) (Thermotoga lettingae).